An 88-amino-acid polypeptide reads, in one-letter code: Class II hydrophobin 1 (88 aa).

The N-terminal stretch at 1–15 is a signal peptide; sequence MKFFIATIFATGALA. 4 disulfide bridges follow: cysteine 19-cysteine 69, cysteine 29-cysteine 59, cysteine 30-cysteine 42, and cysteine 70-cysteine 81.

The protein belongs to the cerato-ulmin hydrophobin family. Homodimer. Homodimers further self-assemble to form highly ordered films at water-air interfaces through intermolecular interactions.

Its subcellular location is the secreted. The protein localises to the cell wall. Aerial growth, conidiation, and dispersal of filamentous fungi in the environment rely upon a capability of their secreting small amphipathic proteins called hydrophobins (HPBs) with low sequence identity. Class I can self-assemble into an outermost layer of rodlet bundles on aerial cell surfaces, conferring cellular hydrophobicity that supports fungal growth, development and dispersal; whereas Class II form highly ordered films at water-air interfaces through intermolecular interactions but contribute nothing to the rodlet structure. This is Class II hydrophobin 1 from Trichoderma asperellum (strain ATCC 204424 / CBS 433.97 / NBRC 101777).